The following is an 88-amino-acid chain: uncharacterized protein (88 aa).

The protein to E.coli YihD.

This is an uncharacterized protein from Haemophilus influenzae (strain ATCC 51907 / DSM 11121 / KW20 / Rd).